The primary structure comprises 130 residues: Histone H2A.1 (130 aa).

The segment at 1–21 is disordered; sequence MSGGKGKVGSSEKASTSRSAK. The residue at position 2 (serine 2) is an N-acetylserine. N6-acetyllysine occurs at positions 5 and 7. Glutamine 105 is modified (N5-methylglutamine). Serine 127 is modified (phosphoserine). The [ST]-Q motif signature appears at 127 to 128; it reads SQ.

It belongs to the histone H2A family. In terms of assembly, the nucleosome is a histone octamer containing two molecules each of H2A, H2B, H3 and H4 assembled in one H3-H4 heterotetramer and two H2A-H2B heterodimers. The octamer wraps approximately 147 bp of DNA. In terms of processing, phosphorylated to form H2AS128ph (gamma-H2A) in response to DNA double-strand breaks (DSBs) generated by exogenous genotoxic agents and by stalled replication forks. Phosphorylation is dependent on the DNA damage checkpoint kinases MEC1/ATR and TEL1/ATM, spreads on either side of a detected DSB site and may mark the surrounding chromatin for recruitment of proteins required for DNA damage signaling and repair. Gamma-H2A is removed from the DNA prior to the strand invasion-primer extension step of the repair process and subsequently dephosphorylated. Dephosphorylation is necessary for efficient recovery from the DNA damage checkpoint. Acetylated by ESA1 to form H2AK4ac and H2AK7ac.

It localises to the nucleus. The protein localises to the chromosome. Functionally, core component of nucleosome which plays a central role in DNA double strand break (DSB) repair. Nucleosomes wrap and compact DNA into chromatin, limiting DNA accessibility to the cellular machineries which require DNA as a template. Histones thereby play a central role in transcription regulation, DNA repair, DNA replication and chromosomal stability. DNA accessibility is regulated via a complex set of post-translational modifications of histones, also called histone code, and nucleosome remodeling. This Meyerozyma guilliermondii (strain ATCC 6260 / CBS 566 / DSM 6381 / JCM 1539 / NBRC 10279 / NRRL Y-324) (Yeast) protein is Histone H2A.1 (HTA1).